A 309-amino-acid polypeptide reads, in one-letter code: Ribosomal RNA small subunit methyltransferase H (309 aa).

Residues 41-43, D61, F85, D102, and Q109 each bind S-adenosyl-L-methionine; that span reads GGH.

The protein belongs to the methyltransferase superfamily. RsmH family.

The protein localises to the cytoplasm. The catalysed reaction is cytidine(1402) in 16S rRNA + S-adenosyl-L-methionine = N(4)-methylcytidine(1402) in 16S rRNA + S-adenosyl-L-homocysteine + H(+). Its function is as follows. Specifically methylates the N4 position of cytidine in position 1402 (C1402) of 16S rRNA. The sequence is that of Ribosomal RNA small subunit methyltransferase H from Albidiferax ferrireducens (strain ATCC BAA-621 / DSM 15236 / T118) (Rhodoferax ferrireducens).